The chain runs to 418 residues: Adenosylhomocysteinase (418 aa).

3 residues coordinate substrate: threonine 53, aspartate 125, and glutamate 150. Threonine 151 to threonine 153 serves as a coordination point for NAD(+). 2 residues coordinate substrate: lysine 180 and aspartate 184. NAD(+) is bound by residues asparagine 185, glycine 214 to glycine 219, glutamate 237, asparagine 272, serine 293 to histidine 295, and asparagine 340.

Belongs to the adenosylhomocysteinase family. It depends on NAD(+) as a cofactor.

Its subcellular location is the cytoplasm. It carries out the reaction S-adenosyl-L-homocysteine + H2O = L-homocysteine + adenosine. It participates in amino-acid biosynthesis; L-homocysteine biosynthesis; L-homocysteine from S-adenosyl-L-homocysteine: step 1/1. In terms of biological role, may play a key role in the regulation of the intracellular concentration of adenosylhomocysteine. This is Adenosylhomocysteinase from Aquifex aeolicus (strain VF5).